The chain runs to 1414 residues: Protein KATNIP homolog (1414 aa).

Disordered stretches follow at residues 1–32 (MHGKSLGSSRKNDSRSKIRQEKESNIDFDEKH), 80–116 (QQSTQDLARESSKSSKIPDDGCSHLPGRRSQTAPGKI), 139–158 (GPNTKYSEDFESDDDMNEDQ), 712–731 (VSATSSKEPPPCPRDDNDLT), 756–783 (SSSSNFQQKSHNQPTKNHLNASSSTFTN), 823–861 (KMDNEDDLENFSNQSSYNSDRPVSGRRKTVQMQDKSEKY), and 924–943 (QQQKAGKQSDSTKNGSSLMP). Basic and acidic residues-rich tracts occupy residues 10-32 (RKNDSRSKIRQEKESNIDFDEKH) and 86-101 (LARESSKSSKIPDDGC). A compositionally biased stretch (acidic residues) spans 147-158 (DFESDDDMNEDQ). Polar residues-rich tracts occupy residues 832–843 (NFSNQSSYNSDR) and 924–940 (QQQKAGKQSDSTKNGSS).

The protein resides in the cytoplasm. Its subcellular location is the cytoskeleton. It is found in the cilium axoneme. The protein localises to the cilium basal body. In terms of biological role, may control cilium integrity. The sequence is that of Protein KATNIP homolog from Xenopus laevis (African clawed frog).